Reading from the N-terminus, the 79-residue chain is RNA-binding protein Hfq (79 aa).

The 60-residue stretch at 10–69 (DPFLNALRKEHVPVSIYLVNGIKLQGNIESFDQYVVLLRNTVTQMVYKHAISTVVPARPV) folds into the Sm domain.

The protein belongs to the Hfq family. As to quaternary structure, homohexamer.

Functionally, RNA chaperone that binds small regulatory RNA (sRNAs) and mRNAs to facilitate mRNA translational regulation in response to envelope stress, environmental stress and changes in metabolite concentrations. Also binds with high specificity to tRNAs. This is RNA-binding protein Hfq from Burkholderia cenocepacia (strain HI2424).